The sequence spans 446 residues: Exodeoxyribonuclease 7 large subunit (446 aa).

The protein belongs to the XseA family. In terms of assembly, heterooligomer composed of large and small subunits.

It is found in the cytoplasm. The enzyme catalyses Exonucleolytic cleavage in either 5'- to 3'- or 3'- to 5'-direction to yield nucleoside 5'-phosphates.. In terms of biological role, bidirectionally degrades single-stranded DNA into large acid-insoluble oligonucleotides, which are then degraded further into small acid-soluble oligonucleotides. The sequence is that of Exodeoxyribonuclease 7 large subunit from Streptococcus pyogenes serotype M3 (strain ATCC BAA-595 / MGAS315).